Here is a 395-residue protein sequence, read N- to C-terminus: NAD(P)H-quinone oxidoreductase subunit H (395 aa).

The protein belongs to the complex I 49 kDa subunit family. In terms of assembly, NDH-1 can be composed of about 15 different subunits; different subcomplexes with different compositions have been identified which probably have different functions.

It is found in the cellular thylakoid membrane. The catalysed reaction is a plastoquinone + NADH + (n+1) H(+)(in) = a plastoquinol + NAD(+) + n H(+)(out). It catalyses the reaction a plastoquinone + NADPH + (n+1) H(+)(in) = a plastoquinol + NADP(+) + n H(+)(out). NDH-1 shuttles electrons from an unknown electron donor, via FMN and iron-sulfur (Fe-S) centers, to quinones in the respiratory and/or the photosynthetic chain. The immediate electron acceptor for the enzyme in this species is believed to be plastoquinone. Couples the redox reaction to proton translocation, and thus conserves the redox energy in a proton gradient. Cyanobacterial NDH-1 also plays a role in inorganic carbon-concentration. The sequence is that of NAD(P)H-quinone oxidoreductase subunit H from Prochlorococcus marinus (strain MIT 9312).